The chain runs to 251 residues: 2-C-methyl-D-erythritol 4-phosphate cytidylyltransferase (251 aa).

Belongs to the IspD/TarI cytidylyltransferase family. IspD subfamily.

The catalysed reaction is 2-C-methyl-D-erythritol 4-phosphate + CTP + H(+) = 4-CDP-2-C-methyl-D-erythritol + diphosphate. It participates in isoprenoid biosynthesis; isopentenyl diphosphate biosynthesis via DXP pathway; isopentenyl diphosphate from 1-deoxy-D-xylulose 5-phosphate: step 2/6. Its function is as follows. Catalyzes the formation of 4-diphosphocytidyl-2-C-methyl-D-erythritol from CTP and 2-C-methyl-D-erythritol 4-phosphate (MEP). The sequence is that of 2-C-methyl-D-erythritol 4-phosphate cytidylyltransferase from Cupriavidus pinatubonensis (strain JMP 134 / LMG 1197) (Cupriavidus necator (strain JMP 134)).